The sequence spans 230 residues: 2-phytyl-1,4-naphtoquinone methyltransferase (230 aa).

The protein belongs to the class I-like SAM-binding methyltransferase superfamily. MenG/UbiE family.

It carries out the reaction demethylphylloquinol + S-adenosyl-L-methionine = phylloquinol + S-adenosyl-L-homocysteine + H(+). Its pathway is cofactor biosynthesis; phylloquinone biosynthesis. In terms of biological role, methyltransferase required for the conversion of 2-phytyl-1,4-beta-naphthoquinol to phylloquinol. This Nostoc punctiforme (strain ATCC 29133 / PCC 73102) protein is 2-phytyl-1,4-naphtoquinone methyltransferase.